The primary structure comprises 443 residues: Ribulose bisphosphate carboxylase large chain (443 aa).

Position 7 is an N6,N6,N6-trimethyllysine (lysine 7). Residues asparagine 116 and threonine 166 each contribute to the substrate site. Lysine 168 serves as the catalytic Proton acceptor. A substrate-binding site is contributed by lysine 170. Mg(2+)-binding residues include lysine 194, aspartate 196, and glutamate 197. Lysine 194 carries the post-translational modification N6-carboxylysine. The active-site Proton acceptor is the histidine 287. Residues arginine 288, histidine 320, and serine 372 each coordinate substrate.

Belongs to the RuBisCO large chain family. Type I subfamily. Heterohexadecamer of 8 large chains and 8 small chains; disulfide-linked. The disulfide link is formed within the large subunit homodimers. Requires Mg(2+) as cofactor. Post-translationally, the disulfide bond which can form in the large chain dimeric partners within the hexadecamer appears to be associated with oxidative stress and protein turnover.

Its subcellular location is the plastid. It is found in the chloroplast. The enzyme catalyses 2 (2R)-3-phosphoglycerate + 2 H(+) = D-ribulose 1,5-bisphosphate + CO2 + H2O. It catalyses the reaction D-ribulose 1,5-bisphosphate + O2 = 2-phosphoglycolate + (2R)-3-phosphoglycerate + 2 H(+). Functionally, ruBisCO catalyzes two reactions: the carboxylation of D-ribulose 1,5-bisphosphate, the primary event in carbon dioxide fixation, as well as the oxidative fragmentation of the pentose substrate in the photorespiration process. Both reactions occur simultaneously and in competition at the same active site. This Abies homolepis (Nikko fir) protein is Ribulose bisphosphate carboxylase large chain.